A 145-amino-acid chain; its full sequence is Probable WRKY transcription factor 75 (145 aa).

Positions 20–38 (SKPELHQGEEESSKVRSEG) are enriched in basic and acidic residues. Residues 20–55 (SKPELHQGEEESSKVRSEGCSKSVESSKKKGKKQRY) form a disordered region. Residues 61-126 (SQVDILDDGY…YEGVHSHPIE (66 aa)) constitute a DNA-binding region (WRKY).

It belongs to the WRKY group II-c family.

Its subcellular location is the nucleus. Functionally, transcription factor. Interacts specifically with the W box (5'-(T)TGAC[CT]-3'), a frequently occurring elicitor-responsive cis-acting element. The chain is Probable WRKY transcription factor 75 (WRKY75) from Arabidopsis thaliana (Mouse-ear cress).